The following is a 204-amino-acid chain: Holliday junction branch migration complex subunit RuvA (204 aa).

The domain I stretch occupies residues 1–63 (MIGKLSGKVD…EEHIHLYGFL (63 aa)). The segment at 64–142 (TLEEKIFFNL…KISSGSAIIK (79 aa)) is domain II. Residues 143-149 (ESLNIKN) form a flexible linker region. A domain III region spans residues 150–204 (ITPVASNEVIKALVNLGFSRFEAQNAVQGIITQNPEISIDELIKTALKNRNSNFS).

Belongs to the RuvA family. In terms of assembly, homotetramer. Forms an RuvA(8)-RuvB(12)-Holliday junction (HJ) complex. HJ DNA is sandwiched between 2 RuvA tetramers; dsDNA enters through RuvA and exits via RuvB. An RuvB hexamer assembles on each DNA strand where it exits the tetramer. Each RuvB hexamer is contacted by two RuvA subunits (via domain III) on 2 adjacent RuvB subunits; this complex drives branch migration. In the full resolvosome a probable DNA-RuvA(4)-RuvB(12)-RuvC(2) complex forms which resolves the HJ.

The protein resides in the cytoplasm. Its function is as follows. The RuvA-RuvB-RuvC complex processes Holliday junction (HJ) DNA during genetic recombination and DNA repair, while the RuvA-RuvB complex plays an important role in the rescue of blocked DNA replication forks via replication fork reversal (RFR). RuvA specifically binds to HJ cruciform DNA, conferring on it an open structure. The RuvB hexamer acts as an ATP-dependent pump, pulling dsDNA into and through the RuvAB complex. HJ branch migration allows RuvC to scan DNA until it finds its consensus sequence, where it cleaves and resolves the cruciform DNA. This Rickettsia rickettsii (strain Iowa) protein is Holliday junction branch migration complex subunit RuvA.